The sequence spans 53 residues: uncharacterized protein (53 aa).

Residues 14-33 show a composition bias toward low complexity; the sequence is SPSSLNNNNNINSKSLQINS. The interval 14–53 is disordered; the sequence is SPSSLNNNNNINSKSLQINSENKSKIQNNNPLGNKGGVQF.

This is an uncharacterized protein from Dictyostelium discoideum (Social amoeba).